A 429-amino-acid chain; its full sequence is Trigger factor (429 aa).

A PPIase FKBP-type domain is found at 164 to 249; that stretch reads GDTAVIDFEG…VKEVKTKVLP (86 aa).

This sequence belongs to the FKBP-type PPIase family. Tig subfamily.

The protein resides in the cytoplasm. The catalysed reaction is [protein]-peptidylproline (omega=180) = [protein]-peptidylproline (omega=0). Functionally, involved in protein export. Acts as a chaperone by maintaining the newly synthesized protein in an open conformation. Functions as a peptidyl-prolyl cis-trans isomerase. In Lysinibacillus sphaericus (strain C3-41), this protein is Trigger factor.